The following is a 403-amino-acid chain: Chalcone synthase 3 (403 aa).

C170 is an active-site residue.

Belongs to the thiolase-like superfamily. Chalcone/stilbene synthases family.

It carries out the reaction (E)-4-coumaroyl-CoA + 3 malonyl-CoA + 3 H(+) = 2',4,4',6'-tetrahydroxychalcone + 3 CO2 + 4 CoA. It functions in the pathway secondary metabolite biosynthesis; flavonoid biosynthesis. In terms of biological role, the primary product of this enzyme is 4,2',4',6'-tetrahydroxychalcone (also termed naringenin-chalcone or chalcone) which can under specific conditions spontaneously isomerize into naringenin. This Gerbera hybrida (Daisy) protein is Chalcone synthase 3 (CHS3).